A 337-amino-acid chain; its full sequence is Holliday junction branch migration complex subunit RuvB (337 aa).

The interval 4–184 (ADRLIEPIAS…FGIVQRLEFY (181 aa)) is large ATPase domain (RuvB-L). ATP-binding positions include isoleucine 23, arginine 24, glycine 65, lysine 68, threonine 69, threonine 70, 131 to 133 (EDY), arginine 174, tyrosine 184, and arginine 221. Threonine 69 serves as a coordination point for Mg(2+). The small ATPAse domain (RuvB-S) stretch occupies residues 185–255 (NVADLSTIVS…TAAAALDMLE (71 aa)). The tract at residues 258–337 (SEGFDIMDRK…FGITKDQTKD (80 aa)) is head domain (RuvB-H). The DNA site is built by arginine 294, arginine 313, and arginine 318.

The protein belongs to the RuvB family. As to quaternary structure, homohexamer. Forms an RuvA(8)-RuvB(12)-Holliday junction (HJ) complex. HJ DNA is sandwiched between 2 RuvA tetramers; dsDNA enters through RuvA and exits via RuvB. An RuvB hexamer assembles on each DNA strand where it exits the tetramer. Each RuvB hexamer is contacted by two RuvA subunits (via domain III) on 2 adjacent RuvB subunits; this complex drives branch migration. In the full resolvosome a probable DNA-RuvA(4)-RuvB(12)-RuvC(2) complex forms which resolves the HJ.

It is found in the cytoplasm. The enzyme catalyses ATP + H2O = ADP + phosphate + H(+). Functionally, the RuvA-RuvB-RuvC complex processes Holliday junction (HJ) DNA during genetic recombination and DNA repair, while the RuvA-RuvB complex plays an important role in the rescue of blocked DNA replication forks via replication fork reversal (RFR). RuvA specifically binds to HJ cruciform DNA, conferring on it an open structure. The RuvB hexamer acts as an ATP-dependent pump, pulling dsDNA into and through the RuvAB complex. RuvB forms 2 homohexamers on either side of HJ DNA bound by 1 or 2 RuvA tetramers; 4 subunits per hexamer contact DNA at a time. Coordinated motions by a converter formed by DNA-disengaged RuvB subunits stimulates ATP hydrolysis and nucleotide exchange. Immobilization of the converter enables RuvB to convert the ATP-contained energy into a lever motion, pulling 2 nucleotides of DNA out of the RuvA tetramer per ATP hydrolyzed, thus driving DNA branch migration. The RuvB motors rotate together with the DNA substrate, which together with the progressing nucleotide cycle form the mechanistic basis for DNA recombination by continuous HJ branch migration. Branch migration allows RuvC to scan DNA until it finds its consensus sequence, where it cleaves and resolves cruciform DNA. This chain is Holliday junction branch migration complex subunit RuvB, found in Colwellia psychrerythraea (strain 34H / ATCC BAA-681) (Vibrio psychroerythus).